Consider the following 512-residue polypeptide: D-alanine--D-alanyl carrier protein ligase (512 aa).

Residue 152 to 153 (TS) coordinates ATP. D-alanine is bound at residue Asp-199. 294 to 299 (NAYGPT) lines the ATP pocket. Val-303 lines the D-alanine pocket. Residues Asp-385, 397–400 (YGGR), and Lys-499 contribute to the ATP site. Residue Lys-499 participates in D-alanine binding.

The protein belongs to the ATP-dependent AMP-binding enzyme family. DltA subfamily.

It is found in the cytoplasm. It catalyses the reaction holo-[D-alanyl-carrier protein] + D-alanine + ATP = D-alanyl-[D-alanyl-carrier protein] + AMP + diphosphate. The protein operates within cell wall biogenesis; lipoteichoic acid biosynthesis. Functionally, catalyzes the first step in the D-alanylation of lipoteichoic acid (LTA), the activation of D-alanine and its transfer onto the D-alanyl carrier protein (Dcp) DltC. In an ATP-dependent two-step reaction, forms a high energy D-alanyl-AMP intermediate, followed by transfer of the D-alanyl residue as a thiol ester to the phosphopantheinyl prosthetic group of the Dcp. D-alanylation of LTA plays an important role in modulating the properties of the cell wall in Gram-positive bacteria, influencing the net charge of the cell wall. In Streptococcus pyogenes serotype M3 (strain SSI-1), this protein is D-alanine--D-alanyl carrier protein ligase.